Here is a 195-residue protein sequence, read N- to C-terminus: Thymidylate kinase (195 aa).

7–14 (GIDGSGKT) contacts ATP.

It belongs to the thymidylate kinase family.

The catalysed reaction is dTMP + ATP = dTDP + ADP. In terms of biological role, phosphorylation of dTMP to form dTDP in both de novo and salvage pathways of dTTP synthesis. This is Thymidylate kinase (tmk) from Aquifex aeolicus (strain VF5).